The chain runs to 173 residues: Transcription factor E (173 aa).

Positions 3-88 (NNPIIQQVLL…TWRATFTKLP (86 aa)) constitute an HTH TFE/IIEalpha-type domain.

The protein belongs to the TFE family. In terms of assembly, monomer. Interaction with RNA polymerase subunits RpoF and RpoE is necessary for Tfe stimulatory transcription activity. Able to interact with Tbp and RNA polymerase in the absence of DNA promoter. Interacts both with the preinitiation and elongation complexes.

Its function is as follows. Transcription factor that plays a role in the activation of archaeal genes transcribed by RNA polymerase. Facilitates transcription initiation by enhancing TATA-box recognition by TATA-box-binding protein (Tbp), and transcription factor B (Tfb) and RNA polymerase recruitment. Not absolutely required for transcription in vitro, but particularly important in cases where Tbp or Tfb function is not optimal. It dynamically alters the nucleic acid-binding properties of RNA polymerases by stabilizing the initiation complex and destabilizing elongation complexes. Seems to translocate with the RNA polymerase following initiation and acts by binding to the non template strand of the transcription bubble in elongation complexes. The polypeptide is Transcription factor E (Methanococcus aeolicus (strain ATCC BAA-1280 / DSM 17508 / OCM 812 / Nankai-3)).